Here is a 279-residue protein sequence, read N- to C-terminus: Shikimate dehydrogenase (NADP(+)) (279 aa).

Residues 21–23 and threonine 68 contribute to the shikimate site; that span reads SKS. Lysine 72 functions as the Proton acceptor in the catalytic mechanism. Glutamate 84 provides a ligand contact to NADP(+). Positions 93 and 109 each coordinate shikimate. NADP(+) contacts are provided by residues 133 to 137, 157 to 162, and methionine 220; these read GAGGA and NRTQAK. Tyrosine 222 serves as a coordination point for shikimate. Residue glycine 244 coordinates NADP(+).

The protein belongs to the shikimate dehydrogenase family. In terms of assembly, homodimer.

It carries out the reaction shikimate + NADP(+) = 3-dehydroshikimate + NADPH + H(+). It functions in the pathway metabolic intermediate biosynthesis; chorismate biosynthesis; chorismate from D-erythrose 4-phosphate and phosphoenolpyruvate: step 4/7. Its function is as follows. Involved in the biosynthesis of the chorismate, which leads to the biosynthesis of aromatic amino acids. Catalyzes the reversible NADPH linked reduction of 3-dehydroshikimate (DHSA) to yield shikimate (SA). The protein is Shikimate dehydrogenase (NADP(+)) of Shewanella halifaxensis (strain HAW-EB4).